The chain runs to 2629 residues: Protein DOP1 homolog (2629 aa).

Disordered stretches follow at residues 561 to 584, 605 to 652, 688 to 710, 1278 to 1340, 1371 to 1395, 1435 to 1471, and 1766 to 1785; these read NKGV…SRLN, SASN…TPRS, AGNV…PQFY, MDES…SSSA, TYRL…QTEH, ISKT…ATDS, and RQDT…SPTR. 2 stretches are compositionally biased toward polar residues: residues 605 to 615 and 636 to 647; these read SASNQSVGRQS and ASDTGQQSSSDL. Positions 1307 to 1320 are enriched in acidic residues; the sequence is DITDNSDSSDFESD. A compositionally biased stretch (basic and acidic residues) spans 1321–1333; sequence SELRETSLEKEDS. 2 stretches are compositionally biased toward polar residues: residues 1381–1391 and 1435–1450; these read GENSLNSVATD and ISKT…SCSQ.

It belongs to the DOP1 family.

It localises to the golgi apparatus membrane. May be involved in protein traffic between late Golgi and early endosomes. This Drosophila pseudoobscura pseudoobscura (Fruit fly) protein is Protein DOP1 homolog.